The following is a 350-amino-acid chain: Pleckstrin (350 aa).

Positions 4-101 (KRIREGYLVK…WVRDIKKAIK (98 aa)) constitute a PH 1 domain. The residue at position 64 (Lys-64) is an N6-acetyllysine. A phosphoserine; by PKC mark is found at Ser-113 and Ser-117. Residues 136–221 (TEKGIKELNL…NPDAFYYFPD (86 aa)) enclose the DEP domain. In terms of domain architecture, PH 2 spans 244-347 (VIIKQGCLLK…WIRAIQMASR (104 aa)).

Major protein kinase C substrate of platelets. This is Pleckstrin (PLEK) from Homo sapiens (Human).